The chain runs to 99 residues: Acylphosphatase-1 (99 aa).

Alanine 2 is subject to N-acetylalanine. The 91-residue stretch at 9-99 (SVDYEVSGRV…LEHTDFQIRK (91 aa)) folds into the Acylphosphatase-like domain. Residues arginine 24 and asparagine 42 contribute to the active site.

The protein belongs to the acylphosphatase family. As to expression, organ-common type isozyme is found in many different tissues.

It catalyses the reaction an acyl phosphate + H2O = a carboxylate + phosphate + H(+). The protein is Acylphosphatase-1 (ACYP1) of Gallus gallus (Chicken).